Reading from the N-terminus, the 511-residue chain is Xylose import ATP-binding protein XylG (511 aa).

ABC transporter domains follow at residues 6-244 (LEMR…VGRE) and 261-506 (FEAR…IGKP). 38 to 45 (GENGAGKS) serves as a coordination point for ATP.

Belongs to the ABC transporter superfamily. Xylose importer (TC 3.A.1.2.4) family. The complex is composed of two ATP-binding proteins (XylG), two transmembrane proteins (XylH) and a solute-binding protein (XylF).

Its subcellular location is the cell inner membrane. It catalyses the reaction D-xylose(out) + ATP + H2O = D-xylose(in) + ADP + phosphate + H(+). Functionally, part of the ABC transporter complex XylFGH involved in xylose import. Responsible for energy coupling to the transport system. The polypeptide is Xylose import ATP-binding protein XylG (Brucella suis biovar 1 (strain 1330)).